The sequence spans 137 residues: Small ribosomal subunit protein uS9 (137 aa).

The protein belongs to the universal ribosomal protein uS9 family.

This is Small ribosomal subunit protein uS9 (rps9) from Sulfurisphaera tokodaii (strain DSM 16993 / JCM 10545 / NBRC 100140 / 7) (Sulfolobus tokodaii).